The chain runs to 247 residues: Fasciclin-like arabinogalactan protein 13 (247 aa).

The signal sequence occupies residues 1 to 25; it reads MATTPLLLLLLTAVFLSTEITAQRA. Residues 34–179 enclose the FAS1 domain; that stretch reads PINITAILEK…LAVYVVDMVL (146 aa). 5 N-linked (GlcNAc...) asparagine glycosylation sites follow: N36, N55, N68, N141, and N150. Residues 189–228 are disordered; that stretch reads KISPMAPPPKSKSPDVSDDSESSKKAAAPSESEKSGSGEM. G224 carries GPI-anchor amidated glycine lipidation. The propeptide at 225–247 is removed in mature form; the sequence is SGEMNTGLGLGLGLVVLCLKFLL.

It belongs to the fasciclin-like AGP family.

The protein localises to the cell membrane. Functionally, may be a cell surface adhesion protein. This Arabidopsis thaliana (Mouse-ear cress) protein is Fasciclin-like arabinogalactan protein 13 (FLA13).